The chain runs to 426 residues: Outer capsid protein P8 (426 aa).

Belongs to the phytoreovirus outer capsid protein P8 family. In terms of assembly, homotrimer. Homomultimer.

The protein resides in the virion. The protein localises to the host cytoplasm. Capsid protein which self-assembles to form the outer icosahedral capsid with a T=13 symmetry, about 70 nm in diameter and consisting of 260 P8 trimers. Mediates the secretion of assembled virus-like particles from host insect cells. This Nephotettix cincticeps (Green rice leafhopper) protein is Outer capsid protein P8.